A 1132-amino-acid chain; its full sequence is Myosin-binding protein C, fast-type (1132 aa).

The segment at 1-59 (MPEPSKAAPKKEAKKKEEKKEEKKEAPPPQEHKDEAPDDVHPPETPDPEGLFLSKPQNV) is disordered. Over residues 9–44 (PKKEAKKKEEKKEEKKEAPPPQEHKDEAPDDVHPPE) the composition is skewed to basic and acidic residues. 5 Ig-like C2-type domains span residues 48–149 (PEGL…SIDV), 249–338 (SEAF…VKEP), 339–429 (PVTV…VEEK), 430–530 (QLEV…KQEP), and 531–630 (PKIH…VVDV). 2 Fibronectin type-III domains span residues 633–729 (PPQS…IAPT) and 731–826 (EPTH…IREI). Residues 830–923 (PKIRLPRHLR…ATLRLRVVER (94 aa)) form the Ig-like C2-type 6 domain. Residues 926–1022 (PPQAVRVMEV…HNTARIAKEG (97 aa)) form the Fibronectin type-III 3 domain. Residues 1039–1132 (PQFLTPLVDR…ECRLDVRVPQ (94 aa)) form the Ig-like C2-type 7 domain.

Belongs to the immunoglobulin superfamily. MyBP family.

Its function is as follows. Thick filament-associated protein located in the crossbridge region of vertebrate striated muscle a bands. In vitro it binds MHC, F-actin and native thin filaments, and modifies the activity of actin-activated myosin ATPase. It may modulate muscle contraction or may play a more structural role. The chain is Myosin-binding protein C, fast-type (MYBPC2) from Gallus gallus (Chicken).